Consider the following 372-residue polypeptide: Tyrosine--tRNA ligase (372 aa).

L-tyrosine-binding residues include tyrosine 37, tyrosine 169, glutamine 173, aspartate 176, and glutamine 191. Positions 246-250 match the 'KMSKS' region motif; the sequence is KMSKS. ATP is bound at residue lysine 249.

Belongs to the class-I aminoacyl-tRNA synthetase family. TyrS type 4 subfamily. As to quaternary structure, homodimer.

Its subcellular location is the cytoplasm. The catalysed reaction is tRNA(Tyr) + L-tyrosine + ATP = L-tyrosyl-tRNA(Tyr) + AMP + diphosphate + H(+). Catalyzes the attachment of tyrosine to tRNA(Tyr) in a two-step reaction: tyrosine is first activated by ATP to form Tyr-AMP and then transferred to the acceptor end of tRNA(Tyr). In Pyrobaculum calidifontis (strain DSM 21063 / JCM 11548 / VA1), this protein is Tyrosine--tRNA ligase.